Here is a 95-residue protein sequence, read N- to C-terminus: Large ribosomal subunit protein eL30 (95 aa).

Belongs to the eukaryotic ribosomal protein eL30 family.

The polypeptide is Large ribosomal subunit protein eL30 (Methanospirillum hungatei JF-1 (strain ATCC 27890 / DSM 864 / NBRC 100397 / JF-1)).